The chain runs to 645 residues: DEAD-box ATP-dependent RNA helicase 46 (645 aa).

Disordered regions lie at residues 1 to 22 and 44 to 137; these read MAAT…KPWK and YERP…AGNE. A WW domain is found at 15 to 49; sequence PNLPKPWKGLVDSRTGYLYFWNPETNVTQYERPAS. Positions 60 to 72 are enriched in low complexity; the sequence is VSSSVQTNQQSSS. Basic and acidic residues predominate over residues 77–91; it reads GKEDDKYGRGSDGPK. Over residues 108–136 the composition is skewed to low complexity; the sequence is SSNDAASGLGNASSGGSSARGPPSSAAGN. Positions 161 to 189 match the Q motif motif; the sequence is MSFEATGLPNELLREVYSAGFSAPSPIQA. The Helicase ATP-binding domain occupies 192-366; that stretch reads WPIAMQNRDI…ADLLVNPAQV (175 aa). 205–212 is a binding site for ATP; sequence AKTGSGKT. Residues 314–317 carry the DEAD box motif; the sequence is DEAD. Residues 395–539 enclose the Helicase C-terminal domain; the sequence is RLEQILRSQE…KVPPQVREMA (145 aa). Residues 532-645 form a disordered region; that stretch reads PPQVREMATR…FHEAMMMKNR (114 aa). Residues 556–597 are compositionally biased toward gly residues; that stretch reads SSGGGGGRGGYGDSGYGGRGESGYGSRGDSGYGGRGDSGGRG. Positions 598 to 608 are enriched in low complexity; that stretch reads SWAPSRDSSGS. Residues 612-623 show a composition bias toward basic and acidic residues; the sequence is GRERSRSPERFR. Residues 624 to 634 are compositionally biased toward low complexity; that stretch reads GGPPSTSSPPR.

This sequence belongs to the DEAD box helicase family. DDX5/DBP2 subfamily.

The catalysed reaction is ATP + H2O = ADP + phosphate + H(+). In Arabidopsis thaliana (Mouse-ear cress), this protein is DEAD-box ATP-dependent RNA helicase 46 (RH46).